Consider the following 1425-residue polypeptide: MANSRQYYPSQDESMSPTSVRSREWEGPSRWTEYLGPEMAASVSSTRSSKQIDGHVGGSTKALNIQWVVQMIEVADGLMAKMYRLNQILEYPDPVGHVFSEAFWKAGVFPNHPRICTLLSKKFPEHFSKLQLERIDKFSLDSLHDGAELHLQSLEPWIQLLLDLMAFREQALRLILDLSSTVITLLPHQNSLILHAFMDLFCAFVRVNLFAEKIPRKMLLQVYNLLHALSRNDRDCDFYHRLVQFIDSYDPPLKGLQEDLNFVSPRIGEVLEAVGPSIFLSADTRKLRNEGFLSPYHPRFPDILTNSAHPMRAQDLANVTSYREWVLLGYLVCPDELLRVTSIDIALVVLKENLVVTLFRDEVSLYQMVCEKEFGIGISFASADSINLTMQYILLHEDYQLYVLPRVLESKKMAKSGRTKQKEADLEYSVAKQVEKMISEVHEQALQLCDTIHRERRILLKQEIGRMVLFFTDQPSLLAPNIQMVFSALALAQSEVLWYFQHAGIASSRSKAARVIPVDIDPNDPTIGFLLDGMDRLCCLVRKYISAARGYALSYLSSSAGRIRYLMGTPGIVALDLDPTLKGLFQRIVQHLESIPKAQGENVSAITCDLSDFRKDWLSILMIVTSSRSSINIRHLEKATVSTGKEGLLSEGNAAYNWSRCVDELESQLSKHGSLKKLYFYHQHLTTVFRNTMFGPEGRPQHCCAWLSVASSFPECASLIIPEEVTKFGRDAVLYVESLIESIMGGLEGLINILDSEGGFGALESQLLPEQAAAYLNNASRISAPSVKSPRVVGGFTLPGHESYPENNKSIKMLEAAIQRLTNLCSILNDMEPICVINHVFVLREYMRECILGNFKRRFLTALQTDNDLQRPSVLESLIRRHMGIVHLAEQHVSMDLTQGIREILLTEAFSGPVSSLHTFEKPAEQQQTTGSAVEVVCNWYMDNIIKDVSGAGILFAPRHKYFKSTRPVGGYFAESVTDLKELQAFVRIFGGYGVDRLDRMMKVHTAALVNCIETSLRSNRELIEAAAASMHSGDRVERDASVRQIVDLDTVIGFCIEAGQALAFDDLLAEASGAVLEDNASLIHSMISGIVEHIPEEIPEKKEIRRIKGVANGVGVAGDHDSEWVRLILEEVGGANDNSWSLLPYFFASFMTSNAWNTTGFNIETGGFSNNIHCLARCISAVIAGSEYVRLQREYQQQHQSLSNGHHSSENLDSEFPPRVTAEASIKSSMLLFVKFAASIVLDSWSEANRSHLVAKLIFLDQLCEISPYLPRSSLESHVPYTILRSIYTQYYSNTPSTPLSTASPYHSPSVSLIHASPSMKNSTTPQRGSGSGSSSTAAPDSGYFKGSSSSLYGQEHYTESETGNSRNNENNNNNKQRGSSRRSGPLDYSSSHKGGSGSNSTGPSPLPRFAVSRSGPISYKQHN.

3 stretches are compositionally biased toward polar residues: residues 1–20 (MANS…PTSV), 1299–1312 (TPLS…SPSV), and 1320–1329 (SMKNSTTPQR). 2 disordered regions span residues 1-24 (MANS…RSRE) and 1299-1425 (TPLS…KQHN). A compositionally biased stretch (low complexity) spans 1362 to 1405 (SETGNSRNNENNNNNKQRGSSRRSGPLDYSSSHKGGSGSNSTGP).

This sequence belongs to the HEM-1/HEM-2 family. As to quaternary structure, binds PIR. As to expression, expressed in roots, root hairs, hypocotyls, cotyledons, stems, leaves, trichomes, and flowers.

Its function is as follows. Involved in regulation of actin and microtubule organization. Part of a WAVE complex that activates the Arp2/3 complex. The polypeptide is Protein NAP1 (NAP1) (Arabidopsis thaliana (Mouse-ear cress)).